Reading from the N-terminus, the 189-residue chain is Ras-like protein 1 (189 aa).

Residue 10–17 participates in GTP binding; sequence GGGGVGKS. Residues 32–40 carry the Effector region motif; sequence YDPTIEDSY. Residues 57-61 and 116-119 contribute to the GTP site; these read DTAGQ and NKCD. C186 carries the cysteine methyl ester modification. Residue C186 is the site of S-geranylgeranyl cysteine attachment. Residues 187 to 189 constitute a propeptide, removed in mature form; sequence LLL.

This sequence belongs to the small GTPase superfamily. Ras family.

It localises to the cell membrane. It catalyses the reaction GTP + H2O = GDP + phosphate + H(+). Functionally, ras proteins bind GDP/GTP and possess intrinsic GTPase activity. The sequence is that of Ras-like protein 1 (RAS1) from Physarum polycephalum (Slime mold).